Here is a 190-residue protein sequence, read N- to C-terminus: MADMIEAKSLRSGQTIFGPNKEILLVLENTFNKTAMRQGIVKTKVKNLRTGAIVWIEFTGDKLEQVIIDKKKMTFLYKDGANYVFMDQQDYSQIEIPEKQLEWEKNFITEDSEVTIISYQSEILGVNLPELVPIEVEFAEEAVQGNTANMARKRARLVSGYELDVPQFIRTGDKIVISTIDGSYRERYNK.

Belongs to the elongation factor P family.

It is found in the cytoplasm. Its pathway is protein biosynthesis; polypeptide chain elongation. Involved in peptide bond synthesis. Stimulates efficient translation and peptide-bond synthesis on native or reconstituted 70S ribosomes in vitro. Probably functions indirectly by altering the affinity of the ribosome for aminoacyl-tRNA, thus increasing their reactivity as acceptors for peptidyl transferase. This Mycoplasma pneumoniae (strain ATCC 29342 / M129 / Subtype 1) (Mycoplasmoides pneumoniae) protein is Elongation factor P (efp).